A 156-amino-acid polypeptide reads, in one-letter code: Small ribosomal subunit protein uS7 (156 aa).

The protein belongs to the universal ribosomal protein uS7 family. Part of the 30S ribosomal subunit. Contacts proteins S9 and S11.

One of the primary rRNA binding proteins, it binds directly to 16S rRNA where it nucleates assembly of the head domain of the 30S subunit. Is located at the subunit interface close to the decoding center, probably blocks exit of the E-site tRNA. The protein is Small ribosomal subunit protein uS7 of Latilactobacillus sakei subsp. sakei (strain 23K) (Lactobacillus sakei subsp. sakei).